A 349-amino-acid polypeptide reads, in one-letter code: NADH-quinone oxidoreductase subunit H (349 aa).

8 helical membrane-spanning segments follow: residues 16-36 (WPVVWTLLKIVAIVAPLMGCV), 88-108 (GLFIVGPILALAPSLVAWAVV), 123-143 (LLFLLAVTSMEVYGVIVAGWA), 157-177 (AAQMVSYEVSMGFALICVLLI), 202-222 (FLSWNWLPLLPMFVVYLISGI), 264-284 (ILVSILTSVLFLGGWLSPVGF), 285-305 (LPDGFHWLALKTASILFIFLW), and 325-345 (VFIPVTLVWVVVVAVWLMSPL).

Belongs to the complex I subunit 1 family. NDH-1 is composed of 14 different subunits. Subunits NuoA, H, J, K, L, M, N constitute the membrane sector of the complex.

The protein localises to the cell inner membrane. It catalyses the reaction a quinone + NADH + 5 H(+)(in) = a quinol + NAD(+) + 4 H(+)(out). In terms of biological role, NDH-1 shuttles electrons from NADH, via FMN and iron-sulfur (Fe-S) centers, to quinones in the respiratory chain. The immediate electron acceptor for the enzyme in this species is believed to be ubiquinone. Couples the redox reaction to proton translocation (for every two electrons transferred, four hydrogen ions are translocated across the cytoplasmic membrane), and thus conserves the redox energy in a proton gradient. This subunit may bind ubiquinone. In Azoarcus sp. (strain BH72), this protein is NADH-quinone oxidoreductase subunit H.